Here is a 266-residue protein sequence, read N- to C-terminus: F-actin-capping protein subunit beta (266 aa).

It belongs to the F-actin-capping protein beta subunit family. Component of the F-actin capping complex, composed of a heterodimer of an alpha and a beta subunit.

The protein resides in the cytoplasm. Its subcellular location is the cytoskeleton. It localises to the actin patch. In terms of biological role, F-actin-capping proteins bind in a Ca(2+)-independent manner to the fast growing ends of actin filaments (barbed end) thereby blocking the exchange of subunits at these ends. Unlike other capping proteins (such as gelsolin and severin), these proteins do not sever actin filaments. This is F-actin-capping protein subunit beta (cap2) from Emericella nidulans (strain FGSC A4 / ATCC 38163 / CBS 112.46 / NRRL 194 / M139) (Aspergillus nidulans).